Reading from the N-terminus, the 242-residue chain is UPF0246 protein SSA_1395 (242 aa).

This sequence belongs to the UPF0246 family.

The polypeptide is UPF0246 protein SSA_1395 (Streptococcus sanguinis (strain SK36)).